A 930-amino-acid chain; its full sequence is Protein translocase subunit SecA (930 aa).

ATP is bound by residues Gln-87, 105–109 (GEGKT), and Asp-515. Zn(2+) is bound by residues Cys-914, Cys-916, Cys-925, and His-926.

Belongs to the SecA family. Monomer and homodimer. Part of the essential Sec protein translocation apparatus which comprises SecA, SecYEG and auxiliary proteins SecDF-YajC and YidC. It depends on Zn(2+) as a cofactor.

The protein localises to the cell inner membrane. Its subcellular location is the cytoplasm. It carries out the reaction ATP + H2O + cellular proteinSide 1 = ADP + phosphate + cellular proteinSide 2.. Part of the Sec protein translocase complex. Interacts with the SecYEG preprotein conducting channel. Has a central role in coupling the hydrolysis of ATP to the transfer of proteins into and across the cell membrane, serving both as a receptor for the preprotein-SecB complex and as an ATP-driven molecular motor driving the stepwise translocation of polypeptide chains across the membrane. The sequence is that of Protein translocase subunit SecA from Burkholderia thailandensis (strain ATCC 700388 / DSM 13276 / CCUG 48851 / CIP 106301 / E264).